The following is a 148-amino-acid chain: Cytochrome c oxidase subunit 6, mitochondrial (148 aa).

The transit peptide at 1 to 40 (MASFFRTAVRGPSAGLFRAVARPQPIAARVSLFSTSSRFR) directs the protein to the mitochondrion.

Belongs to the cytochrome c oxidase subunit 5A family. Component of the cytochrome c oxidase (complex IV, CIV), a multisubunit enzyme composed of 11 subunits. The complex is composed of a catalytic core of 3 subunits Cox1, Cox2 and Cox3, encoded in the mitochondrial DNA, and 8 supernumerary subunits Cox4, Cox5a/Cox5, Cox6, Cox7, Cox8, Cox7a/Cox9, Cox6b/Cox12 and Cox6a/Cox13, which are encoded in the nuclear genome. The complex exists as a monomer or a dimer and forms respiratory supercomplexes (SCs) in the inner mitochondrial membrane with NADH-ubiquinone oxidoreductase (complex I, CI) and ubiquinol-cytochrome c oxidoreductase (cytochrome b-c1 complex, complex III, CIII), resulting in various different assemblies (supercomplexes I(1)IV(1), I(1)III(3)IV(2), III(2)IV(1) and III(2)IV(2) as well as larger supercomplexes of compositions like I(1)III(2)IV(5-6)).

It localises to the mitochondrion inner membrane. It functions in the pathway energy metabolism; oxidative phosphorylation. Functionally, component of the cytochrome c oxidase, the last enzyme in the mitochondrial electron transport chain which drives oxidative phosphorylation. The respiratory chain contains 3 multisubunit complexes succinate dehydrogenase (complex II, CII), ubiquinol-cytochrome c oxidoreductase (cytochrome b-c1 complex, complex III, CIII) and cytochrome c oxidase (complex IV, CIV), that cooperate to transfer electrons derived from NADH and succinate to molecular oxygen, creating an electrochemical gradient over the inner membrane that drives transmembrane transport and the ATP synthase. Cytochrome c oxidase is the component of the respiratory chain that catalyzes the reduction of oxygen to water. Electrons originating from reduced cytochrome c in the intermembrane space (IMS) are transferred via the dinuclear copper A center (CU(A)) of Cox2 and heme A of Cox1 to the active site in Cox1, a binuclear center (BNC) formed by heme A3 and copper B (CU(B)). The BNC reduces molecular oxygen to 2 water molecules using 4 electrons from cytochrome c in the IMS and 4 protons from the mitochondrial matrix. In Neurospora crassa (strain ATCC 24698 / 74-OR23-1A / CBS 708.71 / DSM 1257 / FGSC 987), this protein is Cytochrome c oxidase subunit 6, mitochondrial (cox-6).